Reading from the N-terminus, the 591-residue chain is Inactive metallocarboxypeptidase ECM14 (591 aa).

Positions 1–21 are cleaved as a signal peptide; sequence MRLFARLEVLAILACAVPIAA. Residues 22–175 constitute a propeptide that is removed on maturation; the sequence is IPSFLSNSYP…QTIYESYPSS (154 aa). The region spanning 203–523 is the Peptidase M14 domain; that stretch reads DYQPFSVIVT…NAVMVLGRFL (321 aa). Zn(2+) is bound by residues histidine 265 and glutamate 268. Residues 265–268, arginine 323, and 340–341 each bind substrate; these read HARE and DR. An intrachain disulfide couples cysteine 334 to cysteine 357. N-linked (GlcNAc...) asparagine glycosylation is found at asparagine 350 and asparagine 381. A Zn(2+)-binding site is contributed by histidine 397. 398–399 provides a ligand contact to substrate; the sequence is SY. Basic and acidic residues predominate over residues 533-543; it reads DWEDESQRPKA. Residues 533–591 are disordered; it reads DWEDESQRPKADEDDIPSENELGENDDSWIPFDYRNHDDQNEGEGYDNDEWGFRRRRKG. 2 stretches are compositionally biased toward acidic residues: residues 544–559 and 573–582; these read DEDD…ENDD and NEGEGYDNDE.

The protein belongs to the peptidase M14 family. It depends on Zn(2+) as a cofactor.

The protein resides in the vacuole. The protein localises to the secreted. Its function is as follows. Inactive carboxypeptidase that may play a role in cell wall organization and biogenesis. The protein is Inactive metallocarboxypeptidase ECM14 (ECM14) of Paracoccidioides lutzii (strain ATCC MYA-826 / Pb01) (Paracoccidioides brasiliensis).